The following is a 209-amino-acid chain: Glycerol-3-phosphate acyltransferase (209 aa).

A run of 5 helical transmembrane segments spans residues 8–28 (NVLF…YILA), 78–98 (VLVL…LIGI), 124–144 (VLLV…LIVA), 149–169 (ISSL…FIVH), and 170–190 (PDMP…IIFY).

This sequence belongs to the PlsY family. Probably interacts with PlsX.

It is found in the cell inner membrane. The enzyme catalyses an acyl phosphate + sn-glycerol 3-phosphate = a 1-acyl-sn-glycero-3-phosphate + phosphate. Its pathway is lipid metabolism; phospholipid metabolism. Its function is as follows. Catalyzes the transfer of an acyl group from acyl-phosphate (acyl-PO(4)) to glycerol-3-phosphate (G3P) to form lysophosphatidic acid (LPA). This enzyme utilizes acyl-phosphate as fatty acyl donor, but not acyl-CoA or acyl-ACP. The sequence is that of Glycerol-3-phosphate acyltransferase from Nitratiruptor sp. (strain SB155-2).